Here is a 135-residue protein sequence, read N- to C-terminus: C-type lectin BPL (135 aa).

4 disulfides stabilise this stretch: cysteine 3/cysteine 14, cysteine 31/cysteine 131, cysteine 38/cysteine 133, and cysteine 106/cysteine 123. The C-type lectin domain occupies 10–132; sequence MNGLCYKIFN…CESKNAFLCQ (123 aa). Ca(2+) is bound by residues glutamine 96, aspartate 98, glutamate 104, and aspartate 120. Positions 96-98 match the Galactose-binding motif; sequence QPD.

It belongs to the true venom lectin family. In terms of assembly, homodimer; disulfide-linked. In terms of tissue distribution, expressed by the venom gland.

It localises to the secreted. Galactose-binding protein which recognizes specific carbohydrate structures and agglutinates a variety of animal cells by binding to cell-surface glycoproteins and glycolipids. Calcium-dependent lectin. Shows high hemagglutinating activity in the presence of human erythrocytes, which are agglutinated with a minimum hemagglutination concentration (MHC) of 2.5-0.35 ug/ml. Causes indirect nephrotoxicity. Causes reductions in perfusion pressures, renal vascular resistance, urinary flow, glomerular filtration rate, sodium, potassium and chloride tubular transport. Its effects may be caused by the release of inflammatory mediators. The protein is C-type lectin BPL of Bothrops pirajai (Piraja's lancehead).